The sequence spans 156 residues: Small ribosomal subunit protein uS7c (156 aa).

The protein belongs to the universal ribosomal protein uS7 family. In terms of assembly, part of the 30S ribosomal subunit.

It is found in the plastid. Its subcellular location is the chloroplast. One of the primary rRNA binding proteins, it binds directly to 16S rRNA where it nucleates assembly of the head domain of the 30S subunit. This chain is Small ribosomal subunit protein uS7c (rps7), found in Cyanidium caldarium (Red alga).